A 741-amino-acid polypeptide reads, in one-letter code: Ethylene receptor 2 (741 aa).

Helical transmembrane passes span I23–V43, W53–L73, and I92–L112. Positions 65 and 69 each coordinate Cu cation. Positions D158 to L307 constitute a GAF domain. One can recognise a Histidine kinase domain in the interval V350–E589. At H353 the chain carries Phosphohistidine; by autocatalysis. Positions K615 to L732 constitute a Response regulatory domain. Position 663 is a 4-aspartylphosphate (D663).

This sequence belongs to the ethylene receptor family. Homodimer; disulfide-linked. It depends on Cu cation as a cofactor. Activation probably requires a transfer of a phosphate group between a His in the transmitter domain and an Asp of the receiver domain.

It localises to the endoplasmic reticulum membrane. The enzyme catalyses ATP + protein L-histidine = ADP + protein N-phospho-L-histidine.. May act early in the ethylene signal transduction pathway, possibly as an ethylene receptor, or as a regulator of the pathway. The protein is Ethylene receptor 2 (ETR2) of Pelargonium hortorum (Common geranium).